The sequence spans 345 residues: D-apiose dehydrogenase (345 aa).

15–16 (FF) contacts NAD(+). Positions 24, 25, 27, and 30 each coordinate Mg(2+). Residues aspartate 37, serine 79, 97 to 98 (QK), asparagine 126, and 165 to 167 (QPY) each bind NAD(+). A substrate-binding site is contributed by lysine 98. Substrate-binding residues include glutamine 165, aspartate 178, histidine 182, and tyrosine 232.

Belongs to the Gfo/Idh/MocA family.

The enzyme catalyses D-apiofuranose + NAD(+) = D-apionolactone + NADH + H(+). It functions in the pathway carbohydrate metabolism. In terms of biological role, involved in catabolism of D-apiose. Catalyzes oxidation of D-apiose to D-apionolactone. The sequence is that of D-apiose dehydrogenase from Rhizobium rhizogenes (strain K84 / ATCC BAA-868) (Agrobacterium radiobacter).